A 245-amino-acid chain; its full sequence is Thiopurine S-methyltransferase (245 aa).

An S-adenosyl-L-methionine-binding site is contributed by 29-40 (WREKWVDGKIGF). F40 is a binding site for substrate. K58 carries the post-translational modification N6-acetyllysine. The S-adenosyl-L-methionine site is built by L69, E90, and R152.

It belongs to the class I-like SAM-binding methyltransferase superfamily. TPMT family. In terms of assembly, monomer.

Its subcellular location is the cytoplasm. It catalyses the reaction S-adenosyl-L-methionine + a thiopurine = S-adenosyl-L-homocysteine + a thiopurine S-methylether.. This chain is Thiopurine S-methyltransferase (TPMT), found in Panthera pardus (Leopard).